Reading from the N-terminus, the 297-residue chain is MKIKIGTRPSNLAVAQANMVASSLEAIGIDTEIVKHRSAGDIDTKNPIYSIGKTGVFVQDLNNMILRGEIDVAVHSAKDIPSEIENRLTIAATLKRGSFNDALVSKYDLRSLPISAKVGTSSIRRIFQLKYARQDLKFENIRGNIETRIAKMSELGLDAIVMAEAAIQRLGLNVEYSKLDENKFVPAPNQGIIAVVSKKEGTVRKILEEINDENTFEEMQIERSVVQQLKLGCSTPVGILSRPSGKGHKIIAQFFSMQGDDVSVFEQYLNDLSDVDSLVSYIRENIPREYGYIASEE.

Residue C233 is modified to S-(dipyrrolylmethanemethyl)cysteine.

Belongs to the HMBS family. The cofactor is dipyrromethane.

The enzyme catalyses 4 porphobilinogen + H2O = hydroxymethylbilane + 4 NH4(+). Its pathway is porphyrin-containing compound metabolism; protoporphyrin-IX biosynthesis; coproporphyrinogen-III from 5-aminolevulinate: step 2/4. Tetrapolymerization of the monopyrrole PBG into the hydroxymethylbilane pre-uroporphyrinogen in several discrete steps. This is Probable porphobilinogen deaminase from Thermoplasma volcanium (strain ATCC 51530 / DSM 4299 / JCM 9571 / NBRC 15438 / GSS1).